Consider the following 97-residue polypeptide: Class II hydrophobin 3 (97 aa).

The N-terminal stretch at 1 to 16 (MKFFAAAALFIAGVLA) is a signal peptide. 4 disulfides stabilise this stretch: Cys-30–Cys-79, Cys-40–Cys-70, Cys-41–Cys-53, and Cys-80–Cys-91.

It belongs to the cerato-ulmin hydrophobin family. Homodimer. Homodimers further self-assemble to form highly ordered films at water-air interfaces through intermolecular interactions.

It localises to the secreted. Its subcellular location is the cell wall. Aerial growth, conidiation, and dispersal of filamentous fungi in the environment rely upon a capability of their secreting small amphipathic proteins called hydrophobins (HPBs) with low sequence identity. Class I can self-assemble into an outermost layer of rodlet bundles on aerial cell surfaces, conferring cellular hydrophobicity that supports fungal growth, development and dispersal; whereas Class II form highly ordered films at water-air interfaces through intermolecular interactions but contribute nothing to the rodlet structure. This chain is Class II hydrophobin 3, found in Trichoderma asperellum (strain ATCC 204424 / CBS 433.97 / NBRC 101777).